The sequence spans 650 residues: Acetyl-coenzyme A synthetase (650 aa).

CoA-binding positions include 191–194, T311, and N335; that span reads RGGR. Residues 387 to 389, 411 to 416, D500, and R515 each bind ATP; these read GEP and DTWWQT. Residue S523 coordinates CoA. An ATP-binding site is contributed by R526. V537, H539, and V542 together coordinate Mg(2+). A CoA-binding site is contributed by R584. N6-acetyllysine is present on K609.

This sequence belongs to the ATP-dependent AMP-binding enzyme family. Mg(2+) is required as a cofactor. Post-translationally, acetylated. Deacetylation by the SIR2-homolog deacetylase activates the enzyme.

The enzyme catalyses acetate + ATP + CoA = acetyl-CoA + AMP + diphosphate. Its function is as follows. Catalyzes the conversion of acetate into acetyl-CoA (AcCoA), an essential intermediate at the junction of anabolic and catabolic pathways. AcsA undergoes a two-step reaction. In the first half reaction, AcsA combines acetate with ATP to form acetyl-adenylate (AcAMP) intermediate. In the second half reaction, it can then transfer the acetyl group from AcAMP to the sulfhydryl group of CoA, forming the product AcCoA. The polypeptide is Acetyl-coenzyme A synthetase (Shewanella baltica (strain OS155 / ATCC BAA-1091)).